Here is a 155-residue protein sequence, read N- to C-terminus: SsrA-binding protein (155 aa).

This sequence belongs to the SmpB family.

It localises to the cytoplasm. Required for rescue of stalled ribosomes mediated by trans-translation. Binds to transfer-messenger RNA (tmRNA), required for stable association of tmRNA with ribosomes. tmRNA and SmpB together mimic tRNA shape, replacing the anticodon stem-loop with SmpB. tmRNA is encoded by the ssrA gene; the 2 termini fold to resemble tRNA(Ala) and it encodes a 'tag peptide', a short internal open reading frame. During trans-translation Ala-aminoacylated tmRNA acts like a tRNA, entering the A-site of stalled ribosomes, displacing the stalled mRNA. The ribosome then switches to translate the ORF on the tmRNA; the nascent peptide is terminated with the 'tag peptide' encoded by the tmRNA and targeted for degradation. The ribosome is freed to recommence translation, which seems to be the essential function of trans-translation. This Geobacillus kaustophilus (strain HTA426) protein is SsrA-binding protein.